Here is a 101-residue protein sequence, read N- to C-terminus: MIPVYDYLVLGVILFGLSLVGIMLNRKNIILLLVCVELMLLAVNTNFIAFSHYYNEVGGQVFVFFILTVAAAEAAIGLAIVMLLYRNRGNIDVDKMNHLKG.

3 helical membrane-spanning segments follow: residues 4 to 24 (VYDY…GIML), 29 to 49 (IILL…NFIA), and 61 to 81 (VFVF…LAIV).

This sequence belongs to the complex I subunit 4L family. As to quaternary structure, NDH-1 is composed of 14 different subunits. Subunits NuoA, H, J, K, L, M, N constitute the membrane sector of the complex.

Its subcellular location is the cell inner membrane. It carries out the reaction a quinone + NADH + 5 H(+)(in) = a quinol + NAD(+) + 4 H(+)(out). Functionally, NDH-1 shuttles electrons from NADH, via FMN and iron-sulfur (Fe-S) centers, to quinones in the respiratory chain. The immediate electron acceptor for the enzyme in this species is believed to be ubiquinone. Couples the redox reaction to proton translocation (for every two electrons transferred, four hydrogen ions are translocated across the cytoplasmic membrane), and thus conserves the redox energy in a proton gradient. This Legionella pneumophila (strain Paris) protein is NADH-quinone oxidoreductase subunit K.